Here is a 782-residue protein sequence, read N- to C-terminus: Cleavage and polyadenylation specificity factor subunit 2 (782 aa).

The segment covering 407–416 has biased composition (basic and acidic residues); sequence KKLEQSKEAD. The disordered stretch occupies residues 407–449; sequence KKLEQSKEADIDSSDESDIEEDIDQPSAHKTKHDLMMKGEGSR. Over residues 417 to 430 the composition is skewed to acidic residues; it reads IDSSDESDIEEDID. Ser419, Ser420, and Ser423 each carry phosphoserine. Residues 439-449 show a composition bias toward basic and acidic residues; the sequence is HDLMMKGEGSR. Ser660 bears the Phosphoserine mark.

It belongs to the metallo-beta-lactamase superfamily. RNA-metabolizing metallo-beta-lactamase-like family. CPSF2/YSH1 subfamily. As to quaternary structure, component of the cleavage and polyadenylation specificity factor (CPSF) complex, composed of CPSF1, CPSF2, CPSF3, CPSF4 and FIP1L1. Interacts with CPSF3, CSTF2 and SYMPK. Interacts with ZC3H3.

The protein resides in the nucleus. Component of the cleavage and polyadenylation specificity factor (CPSF) complex that play a key role in pre-mRNA 3'-end formation, recognizing the AAUAAA signal sequence and interacting with poly(A) polymerase and other factors to bring about cleavage and poly(A) addition. Involved in the histone 3' end pre-mRNA processing. The sequence is that of Cleavage and polyadenylation specificity factor subunit 2 (CPSF2) from Homo sapiens (Human).